Reading from the N-terminus, the 577-residue chain is Aspartate--tRNA ligase (577 aa).

An L-aspartate-binding site is contributed by glutamate 171. The aspartate stretch occupies residues 195–198 (QLFK). Arginine 217 serves as a coordination point for L-aspartate. Residues 217–219 (RDE) and glutamine 226 each bind ATP. An L-aspartate-binding site is contributed by histidine 437. Glutamate 472 contacts ATP. Position 479 (arginine 479) interacts with L-aspartate. 524 to 527 (GFDR) is a binding site for ATP.

It belongs to the class-II aminoacyl-tRNA synthetase family. Type 1 subfamily. In terms of assembly, homodimer.

The protein resides in the cytoplasm. The enzyme catalyses tRNA(Asp) + L-aspartate + ATP = L-aspartyl-tRNA(Asp) + AMP + diphosphate. In terms of biological role, catalyzes the attachment of L-aspartate to tRNA(Asp) in a two-step reaction: L-aspartate is first activated by ATP to form Asp-AMP and then transferred to the acceptor end of tRNA(Asp). The sequence is that of Aspartate--tRNA ligase from Deinococcus geothermalis (strain DSM 11300 / CIP 105573 / AG-3a).